We begin with the raw amino-acid sequence, 313 residues long: Ribosomal RNA small subunit methyltransferase H (313 aa).

Residues 35–37 (GGH), aspartate 55, phenylalanine 79, aspartate 101, and glutamine 108 each bind S-adenosyl-L-methionine.

It belongs to the methyltransferase superfamily. RsmH family.

The protein resides in the cytoplasm. It catalyses the reaction cytidine(1402) in 16S rRNA + S-adenosyl-L-methionine = N(4)-methylcytidine(1402) in 16S rRNA + S-adenosyl-L-homocysteine + H(+). Specifically methylates the N4 position of cytidine in position 1402 (C1402) of 16S rRNA. The polypeptide is Ribosomal RNA small subunit methyltransferase H (Shigella sonnei (strain Ss046)).